The following is a 788-amino-acid chain: Integrin beta-6 (788 aa).

Residues 1–21 form the signal peptide; it reads MGIELLCLFFLFLGRNDHVQG. One can recognise a PSI domain in the interval 22–71; the sequence is GCALGGAETCEDCLLIGPQCAWCAQENFTHPSGVGERCDTPANLLAKGCQ. Topologically, residues 22–709 are extracellular; that stretch reads GCALGGAETC…KDCPKPPNIP (688 aa). 19 disulfides stabilise this stretch: Cys23/Cys41, Cys31/Cys454, Cys34/Cys59, Cys44/Cys70, Cys197/Cys204, Cys252/Cys293, Cys394/Cys406, Cys426/Cys452, Cys456/Cys476, Cys467/Cys479, Cys481/Cys490, Cys492/Cys519, Cys502/Cys517, Cys511/Cys522, Cys524/Cys537, Cys539/Cys560, Cys544/Cys558, Cys552/Cys563, and Cys565/Cys574. N-linked (GlcNAc...) asparagine glycosylation is found at Asn48 and Asn97. Residues 131-371 enclose the VWFA domain; it reads YPVDLYYLMD…QLIISAYEEL (241 aa). The Mg(2+) site is built by Asp140, Ser142, and Ser144. Ca(2+)-binding residues include Ser144, Asp147, Asp148, and Glu179. Ca(2+)-binding residues include Asn235, Asp237, Pro239, and Glu240. Glu240 serves as a coordination point for Mg(2+). The N-linked (GlcNAc...) asparagine glycan is linked to Asn260. Ca(2+) contacts are provided by Asp271 and Lys355. Residues Asn387 and Asn396 are each glycosylated (N-linked (GlcNAc...) asparagine). I-EGF domains lie at 456-491, 492-538, 539-575, and 576-615; these read CQKE…PRCE, CGED…PYCQ, CDNF…EYCN, and CTTS…PTCE. N-linked (GlcNAc...) asparagine glycosylation is found at Asn463 and Asn471. Asn541 carries N-linked (GlcNAc...) asparagine glycosylation. The N-linked (GlcNAc...) asparagine glycan is linked to Asn575. Disulfide bonds link Cys576–Cys599, Cys583–Cys597, Cys591–Cys602, Cys604–Cys614, Cys617–Cys620, Cys624–Cys670, Cys630–Cys649, Cys633–Cys645, and Cys678–Cys702. Residues 710 to 730 form a helical membrane-spanning segment; sequence MIMLGVSLAILLIGVVLLCIW. Positions 731-758 are interaction with HAX1; it reads KLLVSFHDRKEVAKFEAERSKAKWQTGT. Over 731–788 the chain is Cytoplasmic; sequence KLLVSFHDRKEVAKFEAERSKAKWQTGTNPLYRGSTSTFKNVTYKHREKQKVDLSTDC.

This sequence belongs to the integrin beta chain family. As to quaternary structure, heterodimer of an alpha and a beta subunit. Interacts with FLNB. Interacts with HAX1. ITGAV:ITGB6 interacts with FBN1. ITGAV:ITGB6 interacts with TGFB1. (Microbial infection) Integrin ITGAV:ITGB6 interacts with coxsackievirus A9, coxsackievirus B1 capsid proteins. In terms of assembly, (Microbial infection) Integrin ITGAV:ITGB6 interacts with herpes simplex virus-1/HHV-1 gH:gL proteins.

It is found in the cell membrane. It localises to the cell junction. The protein resides in the focal adhesion. Integrin alpha-V:beta-6 (ITGAV:ITGB6) is a receptor for fibronectin and cytotactin. It recognizes the sequence R-G-D in its ligands. Internalization of integrin alpha-V/beta-6 via clathrin-mediated endocytosis promotes carcinoma cell invasion. ITGAV:ITGB6 acts as a receptor for fibrillin-1 (FBN1) and mediates R-G-D-dependent cell adhesion to FBN1. Integrin alpha-V:beta-6 (ITGAV:ITGB6) mediates R-G-D-dependent release of transforming growth factor beta-1 (TGF-beta-1) from regulatory Latency-associated peptide (LAP), thereby playing a key role in TGF-beta-1 activation. Its function is as follows. (Microbial infection) Integrin ITGAV:ITGB6 acts as a receptor for Coxsackievirus A9 and Coxsackievirus B1. Functionally, (Microbial infection) Integrin ITGAV:ITGB6 acts as a receptor for Herpes simplex virus-1/HHV-1. The chain is Integrin beta-6 (ITGB6) from Homo sapiens (Human).